A 1820-amino-acid chain; its full sequence is Kinesin-like protein KIF20B (1820 aa).

Residues 58 to 479 enclose the Kinesin motor domain; that stretch reads YLQVCLRIRP…LKFSAIAQKV (422 aa). ATP is bound at residue 152-159; it reads GLTNSGKT. Ser488 bears the Phosphoserine mark. Coiled-coil stretches lie at residues 523 to 603 and 674 to 793; these read ENSL…KIRE and GFED…MENT. Position 560 is a phosphothreonine (Thr560). The interval 829–866 is disordered; it reads SERKRVNENELQQDEPPAKKGSIHVSSAITEDQKKSEE. Ser997 is subject to Phosphoserine. Residues 1050–1107 are necessary and sufficient for interaction with SHTN1; that stretch reads ENSFHSSIEAIWEECKEIVKASSKKSHQIEELEQQIEKLQAEVKGYKDENNRLKEKEH. The segment covering 1247–1264 has biased composition (basic and acidic residues); that stretch reads EEEEETNRQETEKLKEEL. The interval 1247–1275 is disordered; sequence EEEEETNRQETEKLKEELSASSARTQNLK. Over residues 1265–1274 the composition is skewed to polar residues; it reads SASSARTQNL. The tract at residues 1560–1820 is interaction with PIN1; sequence IETQIMDIKP…KRRLRTKTAK (261 aa). Ser1588 carries the post-translational modification Phosphoserine. Residue Thr1644 is modified to Phosphothreonine; by CDK1. Phosphoserine occurs at positions 1658, 1715, and 1740. Positions 1760 to 1772 are enriched in polar residues; the sequence is LSNVEASKENVSQ. Residues 1760–1781 form a disordered region; sequence LSNVEASKENVSQPKRAKRKLY.

This sequence belongs to the TRAFAC class myosin-kinesin ATPase superfamily. Kinesin family. As to quaternary structure, oligomerizes (via kinesin motor domain). Associates with microtubules. Interacts (via C-terminal globular tail region) with PIN1 (via WW domain). Interacts with PRC1. Interacts with SHTN1 (via N-terminus); the interaction is direct and promotes the association of SHTN1 to microtubules in primary neurons. Phosphorylated during mitosis by CDK1. In terms of tissue distribution, brain, ovary, kidney and testis (at protein level). Overexpressed in bladder cancer cells (at protein level). Expressed in testis. Overexpressed in bladder cancer cells.

It is found in the nucleus. The protein localises to the cytoplasm. The protein resides in the cytoskeleton. It localises to the microtubule organizing center. Its subcellular location is the centrosome. It is found in the nucleolus. The protein localises to the nucleoplasm. The protein resides in the spindle. It localises to the spindle pole. Its subcellular location is the midbody. It is found in the cell projection. The protein localises to the axon. The protein resides in the growth cone. Its function is as follows. Plus-end-directed motor enzyme that is required for completion of cytokinesis. Required for proper midbody organization and abscission in polarized cortical stem cells. Plays a role in the regulation of neuronal polarization by mediating the transport of specific cargos. Participates in the mobilization of SHTN1 and in the accumulation of PIP3 in the growth cone of primary hippocampal neurons in a tubulin and actin-dependent manner. In the developing telencephalon, cooperates with SHTN1 to promote both the transition from the multipolar to the bipolar stage and the radial migration of cortical neurons from the ventricular zone toward the superficial layer of the neocortex. Involved in cerebral cortex growth. Acts as an oncogene for promoting bladder cancer cells proliferation, apoptosis inhibition and carcinogenic progression. The sequence is that of Kinesin-like protein KIF20B from Homo sapiens (Human).